The sequence spans 158 residues: NADH-quinone oxidoreductase subunit B (158 aa).

Cys36, Cys37, Cys101, and Cys131 together coordinate [4Fe-4S] cluster.

It belongs to the complex I 20 kDa subunit family. NDH-1 is composed of 14 different subunits. Subunits NuoB, C, D, E, F, and G constitute the peripheral sector of the complex. [4Fe-4S] cluster is required as a cofactor.

The protein resides in the cell inner membrane. The enzyme catalyses a quinone + NADH + 5 H(+)(in) = a quinol + NAD(+) + 4 H(+)(out). NDH-1 shuttles electrons from NADH, via FMN and iron-sulfur (Fe-S) centers, to quinones in the respiratory chain. The immediate electron acceptor for the enzyme in this species is believed to be ubiquinone. Couples the redox reaction to proton translocation (for every two electrons transferred, four hydrogen ions are translocated across the cytoplasmic membrane), and thus conserves the redox energy in a proton gradient. The sequence is that of NADH-quinone oxidoreductase subunit B from Francisella tularensis subsp. tularensis (strain FSC 198).